Reading from the N-terminus, the 354-residue chain is Rhodopsin (354 aa).

Topologically, residues 1-36 (MNGTEGPNFYIPMSNKTGVVRSPFEYPQYYLAEPWK) are extracellular. 2 N-linked (GlcNAc...) asparagine glycosylation sites follow: N2 and N15. The helical transmembrane segment at 37–61 (YSILAAYMFLLILLGFPINFMTLYV) threads the bilayer. Residues 62–73 (TIQHKKLRTPLN) are Cytoplasmic-facing. Residues 74–96 (YILLNLAFANHFMVLCGFTITLY) traverse the membrane as a helical segment. The Extracellular portion of the chain corresponds to 97–110 (TSLHGYFVFGQSGC). A disulfide bridge connects residues C110 and C187. The helical transmembrane segment at 111–133 (YFEGFFATLGGEIALWSLVALAI) threads the bilayer. The 'Ionic lock' involved in activated form stabilization signature appears at 134–136 (ERY). The Cytoplasmic segment spans residues 134–152 (ERYIVVCKPMSNFRFGENH). A helical transmembrane segment spans residues 153–173 (AMMGVAFTWIMALACAVPPLF). Residues 174 to 202 (GWSRYIPEGMQCSCGVDYYTLKPEINNES) lie on the Extracellular side of the membrane. The chain crosses the membrane as a helical span at residues 203-224 (FVIYMFVVHFLIPLIIITFCYG). At 225–252 (RLVCTVKEAAAQQQESATTQKAEKEVTR) the chain is on the cytoplasmic side. A helical transmembrane segment spans residues 253–274 (MVIIMVIFFLICWVPYAYVAFY). Topologically, residues 275 to 286 (IFCNQGSEFGPI) are extracellular. A helical membrane pass occupies residues 287-308 (FMTVPAFFAKSSAIYNPVIYIM). Position 296 is an N6-(retinylidene)lysine (K296). Residues 309 to 354 (LNKQFRNCMITTLCCGKNPFGDDDASSAATSKTEATSVSTSQVSPA) are Cytoplasmic-facing. Residues C322 and C323 are each lipidated (S-palmitoyl cysteine). A disordered region spans residues 332-354 (DASSAATSKTEATSVSTSQVSPA). The span at 334–354 (SSAATSKTEATSVSTSQVSPA) shows a compositional bias: low complexity.

This sequence belongs to the G-protein coupled receptor 1 family. Opsin subfamily. Post-translationally, contains one covalently linked retinal chromophore. Upon light absorption, the covalently bound 11-cis-retinal is converted to all-trans-retinal. After hydrolysis of the Schiff base and release of the covalently bound all-trans-retinal, active rhodopsin is regenerated by binding of a fresh molecule of 11-cis-retinal.

Its subcellular location is the membrane. The protein resides in the cell projection. It localises to the cilium. It is found in the photoreceptor outer segment. In terms of biological role, photoreceptor required for image-forming vision at low light intensity. Required for photoreceptor cell viability after birth. Light-induced isomerization of 11-cis to all-trans retinal triggers a conformational change that activates signaling via G-proteins. Subsequent receptor phosphorylation mediates displacement of the bound G-protein alpha subunit by arrestin and terminates signaling. This is Rhodopsin (RHO) from Rana temporaria (European common frog).